The sequence spans 103 residues: Large ribosomal subunit protein bL21 (103 aa).

Belongs to the bacterial ribosomal protein bL21 family. As to quaternary structure, part of the 50S ribosomal subunit. Contacts protein L20.

Its function is as follows. This protein binds to 23S rRNA in the presence of protein L20. The chain is Large ribosomal subunit protein bL21 from Clostridium perfringens (strain ATCC 13124 / DSM 756 / JCM 1290 / NCIMB 6125 / NCTC 8237 / Type A).